The primary structure comprises 1220 residues: Cullin-associated NEDD8-dissociated protein 1 (1220 aa).

HEAT repeat units lie at residues M1–H35, E42–Q79, F121–I157, A259–V295, L365–R410, I615–D650, T680–E700, S701–L737, K738–K775, F810–K847, L850–K887, and E1020–V1057.

The protein belongs to the CAND family.

Its subcellular location is the nucleus. In terms of biological role, key assembly factor of SCF (SKP1-CUL1-F-box protein) E3 ubiquitin ligase complexes that promotes the exchange of the substrate-recognition F-box subunit in SCF complexes, thereby playing a key role in the cellular repertoire of SCF complexes. Acts as a F-box protein exchange factor. The polypeptide is Cullin-associated NEDD8-dissociated protein 1 (knd1) (Schizosaccharomyces pombe (strain 972 / ATCC 24843) (Fission yeast)).